The primary structure comprises 461 residues: Lysosomal proton-coupled steroid conjugate and bile acid symporter SLC46A3 (461 aa).

The signal sequence occupies residues 1–25; the sequence is MKIPFVEPVICLSVFAVTLNSPLTT. The Extracellular segment spans residues 26 to 70; sequence QYVYRRIWEETGNYSIALESNTSECAKNKSSPIFAFQEEVQKKVS. N-linked (GlcNAc...) asparagine glycans are attached at residues N38, N46, and N53. The chain crosses the membrane as a helical span at residues 71-91; it reads LFNLEMDISGLIPGLVSTFVF. Residues 92 to 101 lie on the Cytoplasmic side of the membrane; that stretch reads LSHSDHGGRK. A helical membrane pass occupies residues 102–124; it reads FPLILSSVGALANSAWLCLLSYF. The Extracellular portion of the chain corresponds to 125 to 133; it reads ALPIQLLIA. The chain crosses the membrane as a helical span at residues 134–156; sequence STFIGALFGNYTTFLGASFAYIV. The Cytoplasmic segment spans residues 157–170; sequence DQCKEKKQRTIRIA. A helical transmembrane segment spans residues 171–191; sequence IIDFLFGVVSGLTGLSSGYFI. The Extracellular portion of the chain corresponds to 192-195; that stretch reads RGLG. Residues 196–216 form a helical membrane-spanning segment; it reads FVWSFLIVTVALFVNLIYILL. The Cytoplasmic portion of the chain corresponds to 217–261; the sequence is FLEDSMKESSSQNISVSWTETFKNLFHRTYMLFKNASGEQQSLCC. A helical membrane pass occupies residues 262–282; that stretch reads LLLFTMITYFFVTIGVSPIFV. Residues 283 to 294 are Extracellular-facing; sequence LYELDSPLCWDE. A helical membrane pass occupies residues 295–315; the sequence is VLIGYGSALGSVTFFSSFLGI. Over 316-324 the chain is Cytoplasmic; sequence WLFSYCMED. A helical transmembrane segment spans residues 325–345; that stretch reads IHMAFIGTFTTMVGMAMTAFA. Topologically, residues 346–347 are extracellular; sequence RT. Residues 348–368 traverse the membrane as a helical segment; it reads TLMMFLVRLPFLFTVMPLSVL. At 369–382 the chain is on the cytoplasmic side; it reads RSMISKVVHSTEQG. Residues 383–403 traverse the membrane as a helical segment; the sequence is TMFACLAFLETLGGITAVSTF. Over 404 to 415 the chain is Extracellular; it reads NGIYSATVAWCK. The chain crosses the membrane as a helical span at residues 416–436; the sequence is GFVFLLSAVLLLIPAISLCVI. Topologically, residues 437–461 are cytoplasmic; it reads KYVSRNTGSYVLLIQEESSEDTSDR. Residues 446–449 carry the Tyrosine-based lysosomal-sorting motif motif; the sequence is YVLL.

Belongs to the major facilitator superfamily. SLC46A family.

The protein resides in the lysosome membrane. The enzyme catalyses estrone 3-sulfate(out) + n H(+)(out) = estrone 3-sulfate(in) + n H(+)(in). It catalyses the reaction 25-hydroxyvitamin D3 sulfate(out) + n H(+)(out) = 25-hydroxyvitamin D3 sulfate(in) + n H(+)(in). The catalysed reaction is cholate(out) + n H(+)(out) = cholate(in) + n H(+)(in). It carries out the reaction glycocholate(out) + n H(+)(out) = glycocholate(in) + n H(+)(in). The enzyme catalyses taurocholate(out) + n H(+)(out) = taurocholate(in) + n H(+)(in). It catalyses the reaction dehydroepiandrosterone 3-sulfate(out) + n H(+)(out) = dehydroepiandrosterone 3-sulfate(in) + n H(+)(in). The catalysed reaction is N-acetyl-D-muramoyl-L-alanyl-D-isoglutamine(out) + n H(+)(out) = N-acetyl-D-muramoyl-L-alanyl-D-isoglutamine(in) + n H(+)(in). It carries out the reaction 2',3'-cGAMP(out) + n H(+)(out) = 2',3'-cGAMP(in) + n H(+)(in). Lysosomal proton-coupled steroid conjugate and bile acid transporter. Preferentially recognizes lipophilic steroid conjugates or bile acis as endogenous substrates and seems to mediate escape from lysosomes to the cytoplasm. Modulates hepatic cytosolic copper homeostasis, maybe acting as a lysosomal copper transporter and sequestering copper ions in the lysosome. Delivers pathogen-associated molecular patterns to cytosolic pattern recognition receptors as part of the innate immune response to microbes. Selectively transports bacterial muramyl dipeptide (MDP) into the cytosol for recognition by NOD2, triggering inflammatory responses. Likely acts as a redundant importer of cyclic GMP-AMP dinucleotides (cGAMPs) in monocyte and macrophage cell lineages. The transport mechanism, its electrogenicity and stoichiometry remain to be elucidated. The sequence is that of Lysosomal proton-coupled steroid conjugate and bile acid symporter SLC46A3 (SLC46A3) from Bos taurus (Bovine).